The sequence spans 177 residues: Dual-action ribosomal maturation protein DarP (177 aa).

It belongs to the DarP family.

Its subcellular location is the cytoplasm. Functionally, member of a network of 50S ribosomal subunit biogenesis factors which assembles along the 30S-50S interface, preventing incorrect 23S rRNA structures from forming. Promotes peptidyl transferase center (PTC) maturation. The sequence is that of Dual-action ribosomal maturation protein DarP from Glaesserella parasuis serovar 5 (strain SH0165) (Haemophilus parasuis).